The chain runs to 110 residues: UPF0251 protein PH0803 (110 aa).

Belongs to the UPF0251 family.

This is UPF0251 protein PH0803 from Pyrococcus horikoshii (strain ATCC 700860 / DSM 12428 / JCM 9974 / NBRC 100139 / OT-3).